A 715-amino-acid chain; its full sequence is Polyribonucleotide nucleotidyltransferase (715 aa).

Positions 487 and 493 each coordinate Mg(2+). Residues 554-613 form the KH domain; that stretch reads PRIETFKIATDKIREVIGTGGKVIREIVEKTGAKVNIDDDGTVKVASSDGESIKAAIKWI. Residues 623 to 691 enclose the S1 motif domain; sequence NAIYDGTVVK…DRGKTRLSMK (69 aa). Residues 696-715 are disordered; it reads ETGEDLEAKQKAAEGATAAE.

It belongs to the polyribonucleotide nucleotidyltransferase family. Mg(2+) serves as cofactor.

It is found in the cytoplasm. It carries out the reaction RNA(n+1) + phosphate = RNA(n) + a ribonucleoside 5'-diphosphate. Functionally, involved in mRNA degradation. Catalyzes the phosphorolysis of single-stranded polyribonucleotides processively in the 3'- to 5'-direction. This chain is Polyribonucleotide nucleotidyltransferase, found in Rhodopseudomonas palustris (strain BisB18).